We begin with the raw amino-acid sequence, 328 residues long: MRTPDFSAIWQASKQLTARIILLAFATFALYVFHDLAFPQGAAAYPFWAQQTAPETPREATGRIVCANCHLAQKPAEVEIPQSVLPDTVFEAVVKIPYDLDSQQVLGDGSKGGLNVGAVLMLPEGFKIAPEDRIPEEMKEKIEGLYFQPYREDQENVVIVGPLPGDQYQEIVFPVLSPDPATNKSIEFGKYSVHLGANRGRGQVYPTGELSNNNAFKASKAGTVTEISQTEEGGYSVTVTTSEGDVVETIPPGPELIVTKGQQVAAGDALTNNPNVGGFGQKDTEVVLQSPGRIKGLMVFLAGIMLAQILLVIKKKQVERVQAAEMNF.

Residues 1–44 form the signal peptide; the sequence is MRTPDFSAIWQASKQLTARIILLAFATFALYVFHDLAFPQGAAA. Positions 45, 66, 69, and 70 each coordinate heme. Residues 294–314 traverse the membrane as a helical segment; it reads IKGLMVFLAGIMLAQILLVIK.

The protein belongs to the cytochrome f family. The 4 large subunits of the cytochrome b6-f complex are cytochrome b6, subunit IV (17 kDa polypeptide, PetD), cytochrome f and the Rieske protein, while the 4 small subunits are PetG, PetL, PetM and PetN. The complex functions as a dimer. Heme serves as cofactor.

The protein resides in the cellular thylakoid membrane. In terms of biological role, component of the cytochrome b6-f complex, which mediates electron transfer between photosystem II (PSII) and photosystem I (PSI), cyclic electron flow around PSI, and state transitions. This Rippkaea orientalis (strain PCC 8801 / RF-1) (Cyanothece sp. (strain PCC 8801)) protein is Cytochrome f.